The chain runs to 242 residues: Uridylate kinase (242 aa).

Residue 8-11 (KFSG) coordinates ATP. Residue Gly-50 coordinates UMP. Residues Gly-51 and Arg-55 each coordinate ATP. UMP is bound by residues Asp-71 and 132–139 (TGNPFFTT). Thr-159, Tyr-165, and Asp-168 together coordinate ATP.

This sequence belongs to the UMP kinase family. In terms of assembly, homohexamer.

The protein resides in the cytoplasm. The catalysed reaction is UMP + ATP = UDP + ADP. The protein operates within pyrimidine metabolism; CTP biosynthesis via de novo pathway; UDP from UMP (UMPK route): step 1/1. Inhibited by UTP. Catalyzes the reversible phosphorylation of UMP to UDP. The protein is Uridylate kinase of Nitratiruptor sp. (strain SB155-2).